The chain runs to 302 residues: Methionyl-tRNA formyltransferase (302 aa).

(6S)-5,6,7,8-tetrahydrofolate is bound at residue 108-111; that stretch reads SLLP. Basic and acidic residues predominate over residues 276–288; the sequence is REGKRPMEPEEFL. The disordered stretch occupies residues 276-302; sequence REGKRPMEPEEFLRGFPLPEGSRAHTA.

The protein belongs to the Fmt family.

It carries out the reaction L-methionyl-tRNA(fMet) + (6R)-10-formyltetrahydrofolate = N-formyl-L-methionyl-tRNA(fMet) + (6S)-5,6,7,8-tetrahydrofolate + H(+). In terms of biological role, attaches a formyl group to the free amino group of methionyl-tRNA(fMet). The formyl group appears to play a dual role in the initiator identity of N-formylmethionyl-tRNA by promoting its recognition by IF2 and preventing the misappropriation of this tRNA by the elongation apparatus. The protein is Methionyl-tRNA formyltransferase of Cereibacter sphaeroides (strain KD131 / KCTC 12085) (Rhodobacter sphaeroides).